A 478-amino-acid chain; its full sequence is Protein adenylyltransferase VbhT (478 aa).

Positions 55 to 200 (FDLDHMKKIH…RRNLTEFTVN (146 aa)) constitute a Fido domain. ATP contacts are provided by residues 85–88 (KDNS), 133–136 (NALH), 140–147 (EGNGRTLR), and Ser175.

As to quaternary structure, homodimer. Interacts with VbhA.

The catalysed reaction is L-tyrosyl-[protein] + ATP = O-(5'-adenylyl)-L-tyrosyl-[protein] + diphosphate. It carries out the reaction L-threonyl-[protein] + ATP = 3-O-(5'-adenylyl)-L-threonyl-[protein] + diphosphate. Its activity is regulated as follows. Adenylyltransferase activity is inhibited by antitoxin VbhA; which acts by competing with ATP-binding at Arg-147 and prevents productive ATP-binding. Its function is as follows. Toxic component of type II toxin-antitoxin (TA) system VbhT-VbhA. Adenylyltransferase involved in virulence by mediating the addition of adenosine 5'-monophosphate (AMP) to specific residue of host GTPases. The resulting AMPylation affects GTPases, impairing actin assembly in infected cells. This Bartonella schoenbuchensis (strain DSM 13525 / NCTC 13165 / R1) protein is Protein adenylyltransferase VbhT (vbhT).